The following is a 178-amino-acid chain: GTP-dependent dephospho-CoA kinase (178 aa).

Residues Asp-55, Val-57, Asp-74, Lys-76, and Glu-127 each coordinate GTP.

This sequence belongs to the GTP-dependent DPCK family.

It carries out the reaction 3'-dephospho-CoA + GTP = GDP + CoA + H(+). Its pathway is cofactor biosynthesis; coenzyme A biosynthesis. In terms of biological role, catalyzes the GTP-dependent phosphorylation of the 3'-hydroxyl group of dephosphocoenzyme A to form coenzyme A (CoA). In Saccharolobus islandicus (strain Y.G.57.14 / Yellowstone #1) (Sulfolobus islandicus), this protein is GTP-dependent dephospho-CoA kinase.